A 298-amino-acid chain; its full sequence is Lipoyl synthase (298 aa).

Positions 40, 45, 51, 67, 71, 74, and 280 each coordinate [4Fe-4S] cluster. The region spanning 53–269 (AVRKTATFMI…KEIALSKGFS (217 aa)) is the Radical SAM core domain.

It belongs to the radical SAM superfamily. Lipoyl synthase family. The cofactor is [4Fe-4S] cluster.

The protein localises to the cytoplasm. It carries out the reaction [[Fe-S] cluster scaffold protein carrying a second [4Fe-4S](2+) cluster] + N(6)-octanoyl-L-lysyl-[protein] + 2 oxidized [2Fe-2S]-[ferredoxin] + 2 S-adenosyl-L-methionine + 4 H(+) = [[Fe-S] cluster scaffold protein] + N(6)-[(R)-dihydrolipoyl]-L-lysyl-[protein] + 4 Fe(3+) + 2 hydrogen sulfide + 2 5'-deoxyadenosine + 2 L-methionine + 2 reduced [2Fe-2S]-[ferredoxin]. Its pathway is protein modification; protein lipoylation via endogenous pathway; protein N(6)-(lipoyl)lysine from octanoyl-[acyl-carrier-protein]. Its function is as follows. Catalyzes the radical-mediated insertion of two sulfur atoms into the C-6 and C-8 positions of the octanoyl moiety bound to the lipoyl domains of lipoate-dependent enzymes, thereby converting the octanoylated domains into lipoylated derivatives. The protein is Lipoyl synthase of Bacillus cereus (strain B4264).